Here is a 512-residue protein sequence, read N- to C-terminus: ATP synthase subunit alpha (512 aa).

Gly169–Thr176 contributes to the ATP binding site.

The protein belongs to the ATPase alpha/beta chains family. As to quaternary structure, F-type ATPases have 2 components, CF(1) - the catalytic core - and CF(0) - the membrane proton channel. CF(1) has five subunits: alpha(3), beta(3), gamma(1), delta(1), epsilon(1). CF(0) has three main subunits: a(1), b(2) and c(9-12). The alpha and beta chains form an alternating ring which encloses part of the gamma chain. CF(1) is attached to CF(0) by a central stalk formed by the gamma and epsilon chains, while a peripheral stalk is formed by the delta and b chains.

Its subcellular location is the cell inner membrane. The enzyme catalyses ATP + H2O + 4 H(+)(in) = ADP + phosphate + 5 H(+)(out). Functionally, produces ATP from ADP in the presence of a proton gradient across the membrane. The alpha chain is a regulatory subunit. The sequence is that of ATP synthase subunit alpha from Azoarcus sp. (strain BH72).